Consider the following 488-residue polypeptide: Zinc metalloproteinase-disintegrin 8 (488 aa).

Residues 1–20 (MIQVLLVTICLAVFPYQGSS) form the signal peptide. Residues 21–191 (IILESGNVND…KASQLNLPPE (171 aa)) constitute a propeptide that is removed on maturation. The 199-residue stretch at 198 to 396 (TYIELVVVAD…STTRCLHNEP (199 aa)) folds into the Peptidase M12B domain. E201 and D285 together coordinate Ca(2+). N-linked (GlcNAc...) asparagine glycosylation is present at N296. 3 disulfide bridges follow: C309–C391, C349–C373, and C351–C356. Position 334 (H334) interacts with Zn(2+). E335 is a catalytic residue. Residues H338 and H344 each coordinate Zn(2+). Residues C391, N394, N409, E413, E416, and D419 each coordinate Ca(2+). Positions 404-488 (PPFCGNYFKE…ADCPRNGLYG (85 aa)) constitute a Disintegrin domain. Disulfide bonds link C407/C426, C418/C436, C420/C431, C430/C453, C444/C450, C449/C474, and C462/C481. The Cell attachment site signature appears at 466–468 (RGD).

It belongs to the venom metalloproteinase (M12B) family. P-II subfamily. Requires Zn(2+) as cofactor. As to expression, expressed by the venom gland.

The protein resides in the secreted. Inhibits ADP-induced platelet aggregation (probably by binding integrin alpha-IIb/beta-3 (ITGA2B/ITGB3)) and degrades fibrinogen. The chain is Zinc metalloproteinase-disintegrin 8 from Crotalus adamanteus (Eastern diamondback rattlesnake).